Reading from the N-terminus, the 146-residue chain is Protein archease (146 aa).

Asp16, Asp145, and Ile146 together coordinate Ca(2+).

This sequence belongs to the archease family.

In terms of biological role, activates the tRNA-splicing ligase complex by facilitating the enzymatic turnover of catalytic subunit RtcB. Acts by promoting the guanylylation of RtcB, a key intermediate step in tRNA ligation. Can also alter the NTP specificity of RtcB such that ATP, dGTP or ITP is used efficiently. This chain is Protein archease, found in Methanosarcina barkeri (strain Fusaro / DSM 804).